The following is an 804-amino-acid chain: Lon protease (804 aa).

A disordered region spans residues 1–23 (MSADSENETSESSPAGEATASTS). In terms of domain architecture, Lon N-terminal spans 30–224 (LILLPVRNAV…KVLDAVAGRI (195 aa)). ATP is bound at residue 376-383 (GPPGVGKT). The Lon proteolytic domain maps to 612 to 793 (TSLPGVVTGL…DDAVREIIED (182 aa)). Catalysis depends on residues Ser699 and Lys742.

Belongs to the peptidase S16 family. As to quaternary structure, homohexamer. Organized in a ring with a central cavity.

It localises to the cytoplasm. The enzyme catalyses Hydrolysis of proteins in presence of ATP.. ATP-dependent serine protease that mediates the selective degradation of mutant and abnormal proteins as well as certain short-lived regulatory proteins. Required for cellular homeostasis and for survival from DNA damage and developmental changes induced by stress. Degrades polypeptides processively to yield small peptide fragments that are 5 to 10 amino acids long. Binds to DNA in a double-stranded, site-specific manner. The chain is Lon protease from Paraburkholderia phytofirmans (strain DSM 17436 / LMG 22146 / PsJN) (Burkholderia phytofirmans).